A 379-amino-acid polypeptide reads, in one-letter code: Carbamoyl phosphate synthase small chain (379 aa).

Residues 1–183 (MTSQDRSEAV…EAYVVEPDGE (183 aa)) are CPSase. The L-glutamine site is built by S51, G235, and G237. In terms of domain architecture, Glutamine amidotransferase type-1 spans 185–379 (LYTVVAYDMG…FVELIQANKK (195 aa)). The active-site Nucleophile is the C263. Positions 264, 267, 305, 307, and 308 each coordinate L-glutamine. Catalysis depends on residues H353 and E355.

Belongs to the CarA family. In terms of assembly, composed of two chains; the small (or glutamine) chain promotes the hydrolysis of glutamine to ammonia, which is used by the large (or ammonia) chain to synthesize carbamoyl phosphate. Tetramer of heterodimers (alpha,beta)4.

It carries out the reaction hydrogencarbonate + L-glutamine + 2 ATP + H2O = carbamoyl phosphate + L-glutamate + 2 ADP + phosphate + 2 H(+). The enzyme catalyses L-glutamine + H2O = L-glutamate + NH4(+). It participates in amino-acid biosynthesis; L-arginine biosynthesis; carbamoyl phosphate from bicarbonate: step 1/1. The protein operates within pyrimidine metabolism; UMP biosynthesis via de novo pathway; (S)-dihydroorotate from bicarbonate: step 1/3. Functionally, small subunit of the glutamine-dependent carbamoyl phosphate synthetase (CPSase). CPSase catalyzes the formation of carbamoyl phosphate from the ammonia moiety of glutamine, carbonate, and phosphate donated by ATP, constituting the first step of 2 biosynthetic pathways, one leading to arginine and/or urea and the other to pyrimidine nucleotides. The small subunit (glutamine amidotransferase) binds and cleaves glutamine to supply the large subunit with the substrate ammonia. The chain is Carbamoyl phosphate synthase small chain from Corynebacterium diphtheriae (strain ATCC 700971 / NCTC 13129 / Biotype gravis).